We begin with the raw amino-acid sequence, 381 residues long: MRSKKLWISLLFALTLIFTMAFSNMSAQAAGKSSTEKKYIVGFKQTMSAMSSAKKKDVISEKGGKVQKQFKYVNAAAATLDEKAVKELKKDPSVAYVEEDHIAHEYAQSVPYGISQIKAPALHSQGYTGSNVKVAVIDSGIDSSHPDLNVRGGASFVPSETNPYQDGSSHGTHVAGTIAALNNSIGVLGVAPSASLYAVKVLDSTGSGQYSWIINGIEWAISNNMDVINMSLGGPTGSTALKTVVDKAVSSGIVVAAAAGNEGSSGSTSTVGYPAKYPSTIAVGAVNSSNQRASFSSAGSELDVMAPGVSIQSTLPGGTYGAYNGTSMATPHVAGAAALILSKHPTWTNAQVRDRLESTATYLGNSFYYGKGLINVQAAAQ.

Positions 1-29 (MRSKKLWISLLFALTLIFTMAFSNMSAQA) are cleaved as a signal peptide. Residues 30–106 (AGKSSTEKKY…VEEDHIAHEY (77 aa)) constitute a propeptide that is removed on maturation. Residues 38-103 (KYIVGFKQTM…VAYVEEDHIA (66 aa)) enclose the Inhibitor I9 domain. Residue Gln108 coordinates Ca(2+). One can recognise a Peptidase S8 domain in the interval 111–380 (PYGISQIKAP…KGLINVQAAA (270 aa)). Asp138 (charge relay system) is an active-site residue. Asp147 is a Ca(2+) binding site. The active-site Charge relay system is His170. Residues Leu181, Asn183, Ile185, Val187, Ala275, Tyr277, Thr280, and Asp303 each coordinate Ca(2+). Ser327 functions as the Charge relay system in the catalytic mechanism.

The protein belongs to the peptidase S8 family. It depends on Ca(2+) as a cofactor.

Its subcellular location is the secreted. The enzyme catalyses Hydrolysis of proteins with broad specificity for peptide bonds, and a preference for a large uncharged residue in P1. Hydrolyzes peptide amides.. With respect to regulation, inhibited by PMSF (phenylmethylsulphonyl fluoride) and 3,4-dichloroisocoumarin but not by EDTA (shown for strain RT-5). Its function is as follows. An extracellular alkaline serine protease, it catalyzes the hydrolysis of proteins and peptide amides. This chain is Subtilisin E, found in Bacillus subtilis (strain 168).